A 156-amino-acid polypeptide reads, in one-letter code: Anaerobic nitrite reductase HB2 (156 aa).

The 150-residue stretch at 2 to 151 (GFTDKQEALV…LASAIKAEMH (150 aa)) folds into the Globin domain. Positions 35–39 (EIAPV) match the Homodimerization motif. Heme b-binding residues include serine 45, lysine 59, histidine 63, and histidine 98. Positions 105-117 (DPHFEVVKEALLR) match the Homodimerization motif.

This sequence belongs to the plant globin family. As to quaternary structure, homodimer. The cofactor is heme b.

The protein localises to the cytoplasm. Its subcellular location is the nucleus. It carries out the reaction Fe(III)-heme b-[protein] + nitric oxide + H2O = Fe(II)-heme b-[protein] + nitrite + 2 H(+). In terms of biological role, phytoglobin that reduces nitrite to nitric oxide (NO) under anoxic conditions (e.g. during flooding or in waterlogged soil). May not function as an oxygen storage or transport protein. Has an unusually high affinity for O(2) through an hexacoordinate heme iron because of a very low dissociation constant. In Solanum lycopersicum (Tomato), this protein is Anaerobic nitrite reductase HB2.